A 212-amino-acid polypeptide reads, in one-letter code: 2,3-bisphosphoglycerate-dependent phosphoglycerate mutase (212 aa).

Substrate is bound by residues 9–16 (RHGQSEWN), 22–23 (TG), arginine 61, 88–91 (ERDY), lysine 99, 115–116 (RR), and 159–160 (GN). Catalysis depends on histidine 10, which acts as the Tele-phosphohistidine intermediate. Residue glutamate 88 is the Proton donor/acceptor of the active site.

It belongs to the phosphoglycerate mutase family. BPG-dependent PGAM subfamily. In terms of assembly, homodimer.

It carries out the reaction (2R)-2-phosphoglycerate = (2R)-3-phosphoglycerate. It functions in the pathway carbohydrate degradation; glycolysis; pyruvate from D-glyceraldehyde 3-phosphate: step 3/5. Its function is as follows. Catalyzes the interconversion of 2-phosphoglycerate and 3-phosphoglycerate. This chain is 2,3-bisphosphoglycerate-dependent phosphoglycerate mutase, found in Methylobacterium radiotolerans (strain ATCC 27329 / DSM 1819 / JCM 2831 / NBRC 15690 / NCIMB 10815 / 0-1).